The primary structure comprises 1423 residues: DNA-directed RNA polymerase subunit beta' (1423 aa).

Residues C70, C72, C85, and C88 each contribute to the Zn(2+) site. Mg(2+) contacts are provided by D461, D463, and D465. Positions 809, 883, 890, and 893 each coordinate Zn(2+). Residues 1383–1423 (EEHAAELRQPVQADTGDDPLGAVVGESHGTDADAGDYLTEE) are disordered.

It belongs to the RNA polymerase beta' chain family. The RNAP catalytic core consists of 2 alpha, 1 beta, 1 beta' and 1 omega subunit. When a sigma factor is associated with the core the holoenzyme is formed, which can initiate transcription. The cofactor is Mg(2+). Zn(2+) serves as cofactor.

The enzyme catalyses RNA(n) + a ribonucleoside 5'-triphosphate = RNA(n+1) + diphosphate. In terms of biological role, DNA-dependent RNA polymerase catalyzes the transcription of DNA into RNA using the four ribonucleoside triphosphates as substrates. The polypeptide is DNA-directed RNA polymerase subunit beta' (Rhizorhabdus wittichii (strain DSM 6014 / CCUG 31198 / JCM 15750 / NBRC 105917 / EY 4224 / RW1) (Sphingomonas wittichii)).